Here is a 350-residue protein sequence, read N- to C-terminus: Protein RecA (350 aa).

65 to 72 (GPESSGKT) serves as a coordination point for ATP.

Belongs to the RecA family.

The protein localises to the cytoplasm. Its function is as follows. Can catalyze the hydrolysis of ATP in the presence of single-stranded DNA, the ATP-dependent uptake of single-stranded DNA by duplex DNA, and the ATP-dependent hybridization of homologous single-stranded DNAs. It interacts with LexA causing its activation and leading to its autocatalytic cleavage. The sequence is that of Protein RecA from Nautilia profundicola (strain ATCC BAA-1463 / DSM 18972 / AmH).